The following is a 289-amino-acid chain: Ribosomal RNA small subunit methyltransferase A (289 aa).

The S-adenosyl-L-methionine site is built by asparagine 21, leucine 23, glycine 48, glutamate 69, aspartate 94, and asparagine 120.

It belongs to the class I-like SAM-binding methyltransferase superfamily. rRNA adenine N(6)-methyltransferase family. RsmA subfamily.

Its subcellular location is the cytoplasm. The catalysed reaction is adenosine(1518)/adenosine(1519) in 16S rRNA + 4 S-adenosyl-L-methionine = N(6)-dimethyladenosine(1518)/N(6)-dimethyladenosine(1519) in 16S rRNA + 4 S-adenosyl-L-homocysteine + 4 H(+). Specifically dimethylates two adjacent adenosines (A1518 and A1519) in the loop of a conserved hairpin near the 3'-end of 16S rRNA in the 30S particle. May play a critical role in biogenesis of 30S subunits. This Actinobacillus pleuropneumoniae serotype 5b (strain L20) protein is Ribosomal RNA small subunit methyltransferase A.